The primary structure comprises 306 residues: Non-specific ribonucleoside hydrolase RihC (306 aa).

His235 is an active-site residue.

It belongs to the IUNH family. RihC subfamily.

Functionally, hydrolyzes both purine and pyrimidine ribonucleosides with a broad-substrate specificity. The protein is Non-specific ribonucleoside hydrolase RihC of Salmonella paratyphi C (strain RKS4594).